The following is a 506-amino-acid chain: AMP phosphorylase (506 aa).

Residues Gly167, Ser193 to Gly198, and Thr202 each bind AMP. Residue Asp255 is the Proton donor of the active site. AMP contacts are provided by Ser263 and Lys287.

Belongs to the thymidine/pyrimidine-nucleoside phosphorylase family. Type 2 subfamily.

It catalyses the reaction AMP + phosphate = alpha-D-ribose 1,5-bisphosphate + adenine. It carries out the reaction CMP + phosphate = cytosine + alpha-D-ribose 1,5-bisphosphate. The catalysed reaction is UMP + phosphate = alpha-D-ribose 1,5-bisphosphate + uracil. In terms of biological role, catalyzes the conversion of AMP and phosphate to adenine and ribose 1,5-bisphosphate (R15P). Exhibits phosphorylase activity toward CMP and UMP in addition to AMP. Functions in an archaeal AMP degradation pathway, together with R15P isomerase and RubisCO. This is AMP phosphorylase from Methanosarcina barkeri (strain Fusaro / DSM 804).